The sequence spans 104 residues: Probable quinol monooxygenase YgiN (104 aa).

Residues 2 to 100 enclose the ABM domain; sequence LTVIAEIRTR…DVLEMNIRIL (99 aa).

In terms of assembly, homodimer.

The catalysed reaction is menadiol + 2 O2 = menadione + 2 superoxide + 2 H(+). Its function is as follows. Can oxidize menadiol to menadione. This Escherichia coli O157:H7 protein is Probable quinol monooxygenase YgiN (ygiN).